We begin with the raw amino-acid sequence, 119 residues long: MARVKRGVQARRRHKKILTLAKGYYNARRKVFRVAKQAVIKAQQYAYIGRKQKKRNFRSLWITRINAAARINGLSYSRFMNGMLKAGITLDRKVLADIAVHDAAGFAALAEKAKGALAA.

Belongs to the bacterial ribosomal protein bL20 family.

Binds directly to 23S ribosomal RNA and is necessary for the in vitro assembly process of the 50S ribosomal subunit. It is not involved in the protein synthesizing functions of that subunit. The polypeptide is Large ribosomal subunit protein bL20 (Xanthomonas campestris pv. campestris (strain 8004)).